A 324-amino-acid chain; its full sequence is DNA repair and recombination protein RadA (324 aa).

ATP is bound at residue 107–114; that stretch reads GEFGSGKS.

The protein belongs to the eukaryotic RecA-like protein family.

Its function is as follows. Involved in DNA repair and in homologous recombination. Binds and assemble on single-stranded DNA to form a nucleoprotein filament. Hydrolyzes ATP in a ssDNA-dependent manner and promotes DNA strand exchange between homologous DNA molecules. This Methanoculleus marisnigri (strain ATCC 35101 / DSM 1498 / JR1) protein is DNA repair and recombination protein RadA.